We begin with the raw amino-acid sequence, 278 residues long: Ribosomal RNA small subunit methyltransferase A (278 aa).

S-adenosyl-L-methionine-binding residues include Asn-27, Leu-29, Gly-54, Glu-75, Asp-95, and Asn-118.

Belongs to the class I-like SAM-binding methyltransferase superfamily. rRNA adenine N(6)-methyltransferase family. RsmA subfamily.

The protein resides in the cytoplasm. It carries out the reaction adenosine(1518)/adenosine(1519) in 16S rRNA + 4 S-adenosyl-L-methionine = N(6)-dimethyladenosine(1518)/N(6)-dimethyladenosine(1519) in 16S rRNA + 4 S-adenosyl-L-homocysteine + 4 H(+). Specifically dimethylates two adjacent adenosines (A1518 and A1519) in the loop of a conserved hairpin near the 3'-end of 16S rRNA in the 30S particle. May play a critical role in biogenesis of 30S subunits. In Chlamydia abortus (strain DSM 27085 / S26/3) (Chlamydophila abortus), this protein is Ribosomal RNA small subunit methyltransferase A.